The primary structure comprises 261 residues: Carbonic anhydrase 1 (261 aa).

The segment at 1-40 is disordered; it reads MASPDWGYDDKNGPEQWSKLYPIANGNNQSPVDIKTSETK. A2 is subject to N-acetylalanine. Residues 4 to 261 enclose the Alpha-carbonic anhydrase domain; it reads PDWGYDDKNG…LKGRTVRASF (258 aa). Catalysis depends on H65, which acts as the Proton donor/acceptor. Zn(2+) contacts are provided by H95, H97, and H120. Substrate is bound by residues T200 and 200 to 201; that span reads TH. The tract at residues 241-261 is disordered; sequence PMQHNNRPTQPLKGRTVRASF.

It belongs to the alpha-carbonic anhydrase family. It depends on Zn(2+) as a cofactor.

The protein localises to the cytoplasm. It carries out the reaction hydrogencarbonate + H(+) = CO2 + H2O. It catalyses the reaction urea = cyanamide + H2O. Inhibited by acetazolamide. Catalyzes the reversible hydration of carbon dioxide. Can hydrate cyanamide to urea. The protein is Carbonic anhydrase 1 (CA1) of Pan troglodytes (Chimpanzee).